Here is a 273-residue protein sequence, read N- to C-terminus: Putative pyruvate, phosphate dikinase regulatory protein (273 aa).

153-160 contributes to the ADP binding site; that stretch reads GISRTSKT.

The protein belongs to the pyruvate, phosphate/water dikinase regulatory protein family. PDRP subfamily.

The enzyme catalyses N(tele)-phospho-L-histidyl/L-threonyl-[pyruvate, phosphate dikinase] + ADP = N(tele)-phospho-L-histidyl/O-phospho-L-threonyl-[pyruvate, phosphate dikinase] + AMP + H(+). The catalysed reaction is N(tele)-phospho-L-histidyl/O-phospho-L-threonyl-[pyruvate, phosphate dikinase] + phosphate + H(+) = N(tele)-phospho-L-histidyl/L-threonyl-[pyruvate, phosphate dikinase] + diphosphate. Bifunctional serine/threonine kinase and phosphorylase involved in the regulation of the pyruvate, phosphate dikinase (PPDK) by catalyzing its phosphorylation/dephosphorylation. This Rhizobium etli (strain ATCC 51251 / DSM 11541 / JCM 21823 / NBRC 15573 / CFN 42) protein is Putative pyruvate, phosphate dikinase regulatory protein.